A 372-amino-acid polypeptide reads, in one-letter code: Phospho-N-acetylmuramoyl-pentapeptide-transferase (372 aa).

10 helical membrane-spanning segments follow: residues 25–45, 73–93, 98–118, 134–154, 176–196, 211–231, 251–271, 275–295, 300–320, and 349–369; these read RSLLSVLTSLTIGLVLGPIMI, TMGGILILLSIGISTLLWADL, VWIVLGVMVVFGAVGWADDWI, FFWTSVASLGAGIALYLIATQ, SIPLSIVPLGLAFIVFTYLVI, GLAIMPVVMVATGLGVFAYLS, LVVICSAMIGAGLAFLWYNAH, VFMGDVGALALGAMLGTIAVM, IVFAIMGGVFVMEAVSVFLQI, and QVVIRFWIITIMLVVLGLMTL.

The protein belongs to the glycosyltransferase 4 family. MraY subfamily. Mg(2+) is required as a cofactor.

It is found in the cell inner membrane. It carries out the reaction UDP-N-acetyl-alpha-D-muramoyl-L-alanyl-gamma-D-glutamyl-meso-2,6-diaminopimeloyl-D-alanyl-D-alanine + di-trans,octa-cis-undecaprenyl phosphate = di-trans,octa-cis-undecaprenyl diphospho-N-acetyl-alpha-D-muramoyl-L-alanyl-D-glutamyl-meso-2,6-diaminopimeloyl-D-alanyl-D-alanine + UMP. The protein operates within cell wall biogenesis; peptidoglycan biosynthesis. Catalyzes the initial step of the lipid cycle reactions in the biosynthesis of the cell wall peptidoglycan: transfers peptidoglycan precursor phospho-MurNAc-pentapeptide from UDP-MurNAc-pentapeptide onto the lipid carrier undecaprenyl phosphate, yielding undecaprenyl-pyrophosphoryl-MurNAc-pentapeptide, known as lipid I. The polypeptide is Phospho-N-acetylmuramoyl-pentapeptide-transferase (Acinetobacter baumannii (strain AB0057)).